Here is a 237-residue protein sequence, read N- to C-terminus: tRNA (guanine-N(7)-)-methyltransferase (237 aa).

4 residues coordinate S-adenosyl-L-methionine: D35, E60, N87, and D113. D113 is a catalytic residue. K117 and D149 together coordinate substrate.

The protein belongs to the class I-like SAM-binding methyltransferase superfamily. TrmB family.

The catalysed reaction is guanosine(46) in tRNA + S-adenosyl-L-methionine = N(7)-methylguanosine(46) in tRNA + S-adenosyl-L-homocysteine. Its pathway is tRNA modification; N(7)-methylguanine-tRNA biosynthesis. Its function is as follows. Catalyzes the formation of N(7)-methylguanine at position 46 (m7G46) in tRNA. The polypeptide is tRNA (guanine-N(7)-)-methyltransferase (Synechococcus sp. (strain WH7803)).